The primary structure comprises 1368 residues: DNA-directed RNA polymerase subunit beta (1368 aa).

It belongs to the RNA polymerase beta chain family. The RNAP catalytic core consists of 2 alpha, 1 beta, 1 beta' and 1 omega subunit. When a sigma factor is associated with the core the holoenzyme is formed, which can initiate transcription.

The enzyme catalyses RNA(n) + a ribonucleoside 5'-triphosphate = RNA(n+1) + diphosphate. In terms of biological role, DNA-dependent RNA polymerase catalyzes the transcription of DNA into RNA using the four ribonucleoside triphosphates as substrates. This is DNA-directed RNA polymerase subunit beta from Syntrophotalea carbinolica (strain DSM 2380 / NBRC 103641 / GraBd1) (Pelobacter carbinolicus).